Here is a 320-residue protein sequence, read N- to C-terminus: tRNA pseudouridine synthase B (320 aa).

Residue Asp49 is the Nucleophile of the active site.

Belongs to the pseudouridine synthase TruB family. Type 1 subfamily.

It carries out the reaction uridine(55) in tRNA = pseudouridine(55) in tRNA. In terms of biological role, responsible for synthesis of pseudouridine from uracil-55 in the psi GC loop of transfer RNAs. The sequence is that of tRNA pseudouridine synthase B from Bartonella tribocorum (strain CIP 105476 / IBS 506).